Reading from the N-terminus, the 158-residue chain is 2-C-methyl-D-erythritol 2,4-cyclodiphosphate synthase (158 aa).

A divalent metal cation is bound by residues D9 and H11. 4-CDP-2-C-methyl-D-erythritol 2-phosphate-binding positions include 9-11 (DVH) and 35-36 (HS). H43 provides a ligand contact to a divalent metal cation. 4-CDP-2-C-methyl-D-erythritol 2-phosphate contacts are provided by residues 57–59 (DIG), 62–66 (FPDTD), 101–107 (AQAPKMA), 133–136 (TTTE), F140, and R143.

It belongs to the IspF family. As to quaternary structure, homotrimer. A divalent metal cation is required as a cofactor.

It carries out the reaction 4-CDP-2-C-methyl-D-erythritol 2-phosphate = 2-C-methyl-D-erythritol 2,4-cyclic diphosphate + CMP. Its pathway is isoprenoid biosynthesis; isopentenyl diphosphate biosynthesis via DXP pathway; isopentenyl diphosphate from 1-deoxy-D-xylulose 5-phosphate: step 4/6. Functionally, involved in the biosynthesis of isopentenyl diphosphate (IPP) and dimethylallyl diphosphate (DMAPP), two major building blocks of isoprenoid compounds. Catalyzes the conversion of 4-diphosphocytidyl-2-C-methyl-D-erythritol 2-phosphate (CDP-ME2P) to 2-C-methyl-D-erythritol 2,4-cyclodiphosphate (ME-CPP) with a corresponding release of cytidine 5-monophosphate (CMP). This is 2-C-methyl-D-erythritol 2,4-cyclodiphosphate synthase from Vibrio cholerae serotype O1 (strain ATCC 39541 / Classical Ogawa 395 / O395).